Here is a 335-residue protein sequence, read N- to C-terminus: Phosphate acyltransferase (335 aa).

This sequence belongs to the PlsX family. As to quaternary structure, homodimer. Probably interacts with PlsY.

The protein localises to the cytoplasm. The catalysed reaction is a fatty acyl-[ACP] + phosphate = an acyl phosphate + holo-[ACP]. The protein operates within lipid metabolism; phospholipid metabolism. Its function is as follows. Catalyzes the reversible formation of acyl-phosphate (acyl-PO(4)) from acyl-[acyl-carrier-protein] (acyl-ACP). This enzyme utilizes acyl-ACP as fatty acyl donor, but not acyl-CoA. The polypeptide is Phosphate acyltransferase (Alkaliphilus oremlandii (strain OhILAs) (Clostridium oremlandii (strain OhILAs))).